We begin with the raw amino-acid sequence, 307 residues long: Reaction center protein M chain (307 aa).

The next 3 helical transmembrane spans lie at 52 to 78 (LGIAGTVSLAFGAAWFFTIGVWYWYQA), 110 to 139 (QGGVWQIASLFMAISVIAWWVRVYTRADQL), and 142 to 167 (GKHMAWAFLSAIWLWSVLGFWRPILM). (7R,8Z)-bacteriochlorophyll b contacts are provided by His181 and His201. Residues 197–225 (YNPFHGLSIAALYGSALLFAMHGATILAV) traverse the membrane as a helical segment. Residues His218 and Glu233 each coordinate Fe cation. Trp251 contributes to the a ubiquinone binding site. Residues 259 to 285 (ATMEGIHRWAIWMAVMVTLTGGIGILL) form a helical membrane-spanning segment. Residue His265 participates in Fe cation binding.

It belongs to the reaction center PufL/M/PsbA/D family. Reaction center is composed of four bacteriochlorophylls, two bacteriopheophytins, two ubiquinones, one iron, and three highly hydrophobic polypeptide chains (designated L, M, and H).

Its subcellular location is the cellular chromatophore membrane. Its function is as follows. The reaction center is a membrane-bound complex that mediates the initial photochemical event in the electron transfer process of photosynthesis. The polypeptide is Reaction center protein M chain (pufM) (Rhodobacter capsulatus (Rhodopseudomonas capsulata)).